A 335-amino-acid polypeptide reads, in one-letter code: Ornithine carbamoyltransferase (335 aa).

Carbamoyl phosphate-binding positions include 60–63 (STRT), glutamine 87, arginine 111, and 138–141 (HPTQ). Residues asparagine 171, aspartate 235, and 239–240 (SM) each bind L-ornithine. Carbamoyl phosphate-binding positions include 277–278 (CL) and arginine 322.

Belongs to the aspartate/ornithine carbamoyltransferase superfamily. OTCase family.

The protein resides in the cytoplasm. It catalyses the reaction carbamoyl phosphate + L-ornithine = L-citrulline + phosphate + H(+). It functions in the pathway amino-acid biosynthesis; L-arginine biosynthesis; L-arginine from L-ornithine and carbamoyl phosphate: step 1/3. Its function is as follows. Reversibly catalyzes the transfer of the carbamoyl group from carbamoyl phosphate (CP) to the N(epsilon) atom of ornithine (ORN) to produce L-citrulline. The chain is Ornithine carbamoyltransferase from Streptomyces avermitilis (strain ATCC 31267 / DSM 46492 / JCM 5070 / NBRC 14893 / NCIMB 12804 / NRRL 8165 / MA-4680).